A 164-amino-acid polypeptide reads, in one-letter code: Transcription elongation factor GreA (164 aa).

Positions 50–76 (YHAAREEQGQQEARIRQLQDLLSNAKV) form a coiled coil.

It belongs to the GreA/GreB family.

Necessary for efficient RNA polymerase transcription elongation past template-encoded arresting sites. The arresting sites in DNA have the property of trapping a certain fraction of elongating RNA polymerases that pass through, resulting in locked ternary complexes. Cleavage of the nascent transcript by cleavage factors such as GreA or GreB allows the resumption of elongation from the new 3'terminus. GreA releases sequences of 2 to 3 nucleotides. This chain is Transcription elongation factor GreA, found in Mycobacterium bovis (strain ATCC BAA-935 / AF2122/97).